A 257-amino-acid polypeptide reads, in one-letter code: Global transcriptional regulator CodY (257 aa).

The interval 1 to 155 is GAF domain; sequence MSLLSKTREL…AATVIGMEIL (155 aa). A DNA-binding region (H-T-H motif) is located at residues 203-222; it reads ASKVADRVGITRSVIVNALR.

It belongs to the CodY family.

The protein resides in the cytoplasm. DNA-binding global transcriptional regulator which is involved in the adaptive response to starvation and acts by directly or indirectly controlling the expression of numerous genes in response to nutrient availability. During rapid exponential growth, CodY is highly active and represses genes whose products allow adaptation to nutrient depletion. The chain is Global transcriptional regulator CodY from Staphylococcus haemolyticus (strain JCSC1435).